Consider the following 117-residue polypeptide: Large ribosomal subunit protein uL18 (117 aa).

It belongs to the universal ribosomal protein uL18 family. In terms of assembly, part of the 50S ribosomal subunit; part of the 5S rRNA/L5/L18/L25 subcomplex. Contacts the 5S and 23S rRNAs.

Its function is as follows. This is one of the proteins that bind and probably mediate the attachment of the 5S RNA into the large ribosomal subunit, where it forms part of the central protuberance. This Phytoplasma australiense protein is Large ribosomal subunit protein uL18.